Consider the following 105-residue polypeptide: Vacuolar ATPase assembly integral membrane protein VMA21 homolog (105 aa).

Positions Met-1 to Ser-26 are disordered. Residues Met-1–Leu-36 lie on the Cytoplasmic side of the membrane. A helical membrane pass occupies residues Phe-37–Val-57. Residues Leu-58–Lys-68 are Lumenal-facing. A helical transmembrane segment spans residues Val-69–Ile-89. Residues Tyr-90 to Asp-105 lie on the Cytoplasmic side of the membrane.

It belongs to the VMA21 family.

The protein resides in the endoplasmic reticulum membrane. Its subcellular location is the endoplasmic reticulum-Golgi intermediate compartment membrane. The protein localises to the cytoplasmic vesicle. It localises to the COPII-coated vesicle membrane. Required for the assembly of the V0 complex of the vacuolar ATPase (V-ATPase) in the endoplasmic reticulum. The polypeptide is Vacuolar ATPase assembly integral membrane protein VMA21 homolog (Drosophila sechellia (Fruit fly)).